The primary structure comprises 427 residues: MSNNQILFERAQKTIPGGVNSPVRAFRSVGGTPRFVARAQGPYFWDADGKQYIDYIGSWGPMIVGHVHPEVLSAVQNVLADGFSFGAPTEAEIEIAEEICKLVPSIEQVRMVSSGTEATMSALRLARGFTGRSRIVKFEGCYHGHADSLLVKAGSGLLTFGNPTSAGVPADIAKHTTVLEYNNVAALEEAFGAFGDEIAAVIVEPVAGNMNLVRGTPEFLNALRALCTKHGAVLIFDEVMCGFRVALGGAQTYYGIAADLTCLGKVIGGGMPAAAFGGRRDIMAHLAPLGGVYQAGTLSGNPIAVAAGLKTLQLIQAPGFYDALTAQTKRLADGLAAEARAAGVPFAADSIGAMFGLYFAERVPGSFAEVTKSNVERFNRFFHLMLDEGVYFAPSAYEAGFVSSTHDDAVIDATLAAARRAFAALAA.

K265 carries the N6-(pyridoxal phosphate)lysine modification.

This sequence belongs to the class-III pyridoxal-phosphate-dependent aminotransferase family. HemL subfamily. As to quaternary structure, homodimer. The cofactor is pyridoxal 5'-phosphate.

The protein resides in the cytoplasm. It carries out the reaction (S)-4-amino-5-oxopentanoate = 5-aminolevulinate. It functions in the pathway porphyrin-containing compound metabolism; protoporphyrin-IX biosynthesis; 5-aminolevulinate from L-glutamyl-tRNA(Glu): step 2/2. The protein is Glutamate-1-semialdehyde 2,1-aminomutase of Burkholderia cenocepacia (strain HI2424).